Consider the following 251-residue polypeptide: NAD kinase (251 aa).

The active-site Proton acceptor is Asp-51. NAD(+) is bound by residues Asp-51–Gly-52, Lys-56, Asn-113–Glu-114, Lys-124, His-140, Asp-142, Thr-153–Ser-158, and Ala-177.

It belongs to the NAD kinase family. Requires a divalent metal cation as cofactor.

It localises to the cytoplasm. It catalyses the reaction NAD(+) + ATP = ADP + NADP(+) + H(+). In terms of biological role, involved in the regulation of the intracellular balance of NAD and NADP, and is a key enzyme in the biosynthesis of NADP. Catalyzes specifically the phosphorylation on 2'-hydroxyl of the adenosine moiety of NAD to yield NADP. This chain is NAD kinase, found in Thermosipho melanesiensis (strain DSM 12029 / CIP 104789 / BI429).